The primary structure comprises 474 residues: uncharacterized protein (474 aa).

Residues 3 to 23 (LTLWLVLGAVGVGAVGTGVGF) form a helical membrane-spanning segment. Residues 171-296 (VSDGSSSKTR…KETKDRTKVD (126 aa)) are disordered. A compositionally biased stretch (basic residues) spans 180 to 210 (RTPKKTKTSKKKPIKKKSSKSKSSKGSKKQK). A compositionally biased stretch (polar residues) spans 231-253 (TRSQSKQQKGQEQATDQTDSEGV). The segment covering 257-266 (EGADNTDTEL) has biased composition (acidic residues). Low complexity predominate over residues 267 to 281 (VETTAETTEQEATTK). Basic and acidic residues predominate over residues 282-296 (STKDTKETKDRTKVD).

The protein resides in the membrane. This is an uncharacterized protein from Mycoplasma pneumoniae (strain ATCC 29342 / M129 / Subtype 1) (Mycoplasmoides pneumoniae).